A 224-amino-acid polypeptide reads, in one-letter code: Synaptogyrin-2 (224 aa).

N-acetylmethionine is present on Met-1. Ser-3 is modified (phosphoserine). Residues Phe-20–Lys-171 form the MARVEL domain. Helical transmembrane passes span Val-26–Glu-46, Ala-73–Pro-93, Val-105–Phe-125, and Ala-147–Tyr-167. The interval Pro-196 to Tyr-224 is disordered. Positions Thr-202 to Gly-217 are enriched in polar residues.

It belongs to the synaptogyrin family. Post-translationally, may be tyrosine phosphorylated by Src.

It localises to the cytoplasmic vesicle membrane. The protein resides in the cytoplasmic vesicle. Its subcellular location is the secretory vesicle. The protein localises to the synaptic vesicle membrane. Functionally, may play a role in regulated exocytosis. In neuronal cells, modulates the localization of synaptophysin/SYP into synaptic-like microvesicles and may therefore play a role in the formation and/or the maturation of this vesicles. May also play a role in GLUT4 storage and transport to the plasma membrane. The chain is Synaptogyrin-2 from Bos taurus (Bovine).